Here is a 349-residue protein sequence, read N- to C-terminus: Cobalt-precorrin-5B C(1)-methyltransferase (349 aa).

The protein belongs to the CbiD family.

It carries out the reaction Co-precorrin-5B + S-adenosyl-L-methionine = Co-precorrin-6A + S-adenosyl-L-homocysteine. Its pathway is cofactor biosynthesis; adenosylcobalamin biosynthesis; cob(II)yrinate a,c-diamide from sirohydrochlorin (anaerobic route): step 6/10. Functionally, catalyzes the methylation of C-1 in cobalt-precorrin-5B to form cobalt-precorrin-6A. This is Cobalt-precorrin-5B C(1)-methyltransferase from Saccharolobus islandicus (strain Y.N.15.51 / Yellowstone #2) (Sulfolobus islandicus).